Here is a 78-residue protein sequence, read N- to C-terminus: Small ribosomal subunit protein bS18 (78 aa).

This sequence belongs to the bacterial ribosomal protein bS18 family. In terms of assembly, part of the 30S ribosomal subunit. Forms a tight heterodimer with protein bS6.

Its function is as follows. Binds as a heterodimer with protein bS6 to the central domain of the 16S rRNA, where it helps stabilize the platform of the 30S subunit. The sequence is that of Small ribosomal subunit protein bS18 from Pediococcus pentosaceus (strain ATCC 25745 / CCUG 21536 / LMG 10740 / 183-1w).